The following is a 339-amino-acid chain: MDTIILGIESSCDDTSAAVIKNGVLLSNVVSSQAVHEAYGGVVPELASRAHQQNIVPVVHEALKRAGVTKEQLSAVAFTRGPGLMGSLLVGVSFAKGFARSLNIPMIDVNHLQAHVLAHFIKESEEDNNQPKFPFLCLLVSGGNSQIILVKAYNDMEVLGQTIDDAAGEAIDKCSKVMGLGYPGGPIIDKLARQGNPKAFTFSKPHIPDYNYSFSGLKTSFLYSLRDWLKEDPDFIEHHKNDLAASLEATIVDILMDKLRKAAKNLKINEVAVAGGVSANNGLRNSFREHAGKYGWNIYIPKFSFTTDNAAMIAITGYYKYLDNDFCTIDKPAYSRVTI.

Residues histidine 111 and histidine 115 each coordinate Fe cation. Residues 139–143, aspartate 172, glycine 185, aspartate 189, and asparagine 280 each bind substrate; that span reads LVSGG. Aspartate 308 is a binding site for Fe cation.

The protein belongs to the KAE1 / TsaD family. It depends on Fe(2+) as a cofactor.

It localises to the cytoplasm. It catalyses the reaction L-threonylcarbamoyladenylate + adenosine(37) in tRNA = N(6)-L-threonylcarbamoyladenosine(37) in tRNA + AMP + H(+). Required for the formation of a threonylcarbamoyl group on adenosine at position 37 (t(6)A37) in tRNAs that read codons beginning with adenine. Is involved in the transfer of the threonylcarbamoyl moiety of threonylcarbamoyl-AMP (TC-AMP) to the N6 group of A37, together with TsaE and TsaB. TsaD likely plays a direct catalytic role in this reaction. The sequence is that of tRNA N6-adenosine threonylcarbamoyltransferase from Phocaeicola vulgatus (strain ATCC 8482 / DSM 1447 / JCM 5826 / CCUG 4940 / NBRC 14291 / NCTC 11154) (Bacteroides vulgatus).